Reading from the N-terminus, the 276-residue chain is Zinc transporter ZTP29 (276 aa).

The Cytoplasmic portion of the chain corresponds to 1-6 (MDSQML). A helical membrane pass occupies residues 7 to 27 (VALGLSLVGGLSTSLGALFVV). At 28–35 (LSETPNMK) the chain is on the lumenal side. The helical transmembrane segment at 36–56 (MLGLLQGFASGLMLSISFLDL) threads the bilayer. The Cytoplasmic portion of the chain corresponds to 57–63 (AHNAINS). The chain crosses the membrane as a helical span at residues 64–84 (IGFFKANLWFFGGVIFFACIT). The Lumenal segment spans residues 85-123 (KFIPEPTLGPSTDGKRRKKNGDEGGKDMMKKHRKQVLYS). A helical transmembrane segment spans residues 124 to 144 (GLITAIGISLHNFPEGMAVFL). At 145 to 156 (GSIKGMRVGVNL) the chain is on the cytoplasmic side. Residues 157–177 (ALAIALHNIPEGVAVALPIYF) traverse the membrane as a helical segment. At 178 to 187 (ATESKWQAFK) the chain is on the lumenal side. Residues 188–208 (LATLSGLAEPLGVIIVAYLFP) traverse the membrane as a helical segment. Residues 209 to 219 (RSLSPEILEGL) are Cytoplasmic-facing. A helical transmembrane segment spans residues 220–240 (LGAVGGIMAFLTLHEMLPLAF). Residues 241–250 (DYAGQKQAVK) are Lumenal-facing. Residues 251-271 (AVFFGMACMSASLYFLELSLP) traverse the membrane as a helical segment. The Cytoplasmic segment spans residues 272-276 (ETMSL).

It belongs to the ZIP transporter (TC 2.A.5) family. ZupT subfamily. As to expression, expressed in hypocotyls, cotyledons, leaves and anthers.

The protein localises to the endoplasmic reticulum membrane. Zinc transporter involved response to salt stress. May act through the regulation of zinc levels required to induce the unfolded protein response (UPR) pathway. This is Zinc transporter ZTP29 (ZTP29) from Arabidopsis thaliana (Mouse-ear cress).